Here is a 953-residue protein sequence, read N- to C-terminus: MALVFQFGQPVRAQPLPGLCHGKLIRTNACDVCNSTDLPEVEIISLLEEQLPHYKLRADTIYGYDHDDWLHTPLISPDANIDLTTEQIEETLKYFLLCAERVGQMTKTYNDIDAVTRLLEEKERDLELAARIGQSLLKKNKTLTERNELLEEQVEHIREEVSQLRHELSMKDELLQFYTSAAEESEPESVCSTPLKRNESSSSVQNYFHLDSLQKKLKDLEEENVVLRSEASQLKTETITYEEKEQQLVNDCVKELRDANVQIASISEELAKKTEDAARQQEEITHLLSQIVDLQKKAKACAVENEELVQHLGAAKDAQRQLTAELRELEDKYAECMEMLHEAQEELKNLRNKTMPNTTSRRYHSLGLFPMDSLAAEIEGTMRKELQLEEAESPDITHQKRVFETVRNINQVVKQRSLTPSPMNIPGSNQSSAMNSLLSSCVSTPRSSFYGSDIGNVVLDNKTNSIILETEAADLGNDERSKKPGTPGTPGSHDLETALRRLSLRRENYLSERRFFEEEQERKLQELAEKGELRSGSLTPTESIMSLGTHSRFSEFTGFSGMSFSSRSYLPEKLQIVKPLEGSATLHHWQQLAQPHLGGILDPRPGVVTKGFRTLDVDLDEVYCLNDFEEDDTGDHISLPRLATSTPVQHPETSAHHPGKCMSQTNSTFTFTTCRILHPSDELTRVTPSLNSAPTPACGSTSHLKSTPVATPCTPRRLSLAESFTNTRESTTTMSTSLGLVWLLKERGISAAVYDPQSWDRAGRGSLLHSYTPKMAVIPSTPPNSPMQTPTSSPPSFEFKCTSPPYDNFLASKPASSILREVREKNVRSSESQTDVSVSNLNLVDKVRRFGVAKVVNSGRAHVPTLTEEQGPLLCGPPGPAPALVPRGLVPEGLPLRCPTVTSAIGGLQLNSGIRRNRSFPTMVGSSMQMKAPVTLTSGILMGAKLSKQTSLR.

In terms of domain architecture, HAP1 N-terminal spans 47-354; it reads LEEQLPHYKL…EELKNLRNKT (308 aa). Residues 104–356 adopt a coiled-coil conformation; that stretch reads QMTKTYNDID…LKNLRNKTMP (253 aa). The interaction with HGS stretch occupies residues 359–509; the sequence is TSRRYHSLGL…RRLSLRRENY (151 aa). Ser447 carries O-linked (GlcNAc) serine glycosylation. The interval 472–495 is disordered; sequence AADLGNDERSKKPGTPGTPGSHDL. A coiled-coil region spans residues 492-532; it reads SHDLETALRRLSLRRENYLSERRFFEEEQERKLQELAEKGE. A Phosphoserine modification is found at Ser537. The tract at residues 658-672 is interaction with OGT; sequence PGKCMSQTNSTFTFT. Ser680 and Ser719 each carry an O-linked (GlcNAc) serine glycan. Ser719 carries the phosphoserine modification. The segment at 777–796 is disordered; that stretch reads VIPSTPPNSPMQTPTSSPPS. Residues 786 to 796 are compositionally biased toward low complexity; it reads PMQTPTSSPPS. Phosphoserine is present on Ser919. Residue Thr935 is glycosylated (O-linked (GlcNAc) threonine).

The protein belongs to the milton family. As to quaternary structure, interacts with RHOT1 and RHOT2. Found in a complex with KIF5B, OGT, RHOT1 and RHOT2. Interacts with HGS. Interacts with GABRA1. Interacts with KIF5C. Interacts with OGT; stable interaction is not required for glycosylation of this protein by OGT. Isoform 1 interacts with OGT. Post-translationally, O-glycosylated. Glycosylated by OGT; glycosylation in response to increased extracellular glucose levels is required for and leads to regulation of mitochondrial motility by OGT. In terms of tissue distribution, high expression in spinal cord and moderate expression in all other tissues and specific brain regions examined. Expressed in all cell lines examined.

The protein resides in the cytoplasm. The protein localises to the nucleus. Its subcellular location is the mitochondrion. It is found in the early endosome. It localises to the endosome. The protein resides in the mitochondrion membrane. The protein localises to the cell cortex. Functionally, involved in the regulation of endosome-to-lysosome trafficking, including endocytic trafficking of EGF-EGFR complexes and GABA-A receptors. Involved in mitochondrial motility. When O-glycosylated, abolishes mitochondrial motility. Crucial for recruiting OGT to the mitochondrial surface of neuronal processes. TRAK1 and RHOT form an essential protein complex that links KIF5 to mitochondria for light chain-independent, anterograde transport of mitochondria. The chain is Trafficking kinesin-binding protein 1 (TRAK1) from Homo sapiens (Human).